Consider the following 342-residue polypeptide: S-adenosylmethionine:tRNA ribosyltransferase-isomerase (342 aa).

The protein belongs to the QueA family. In terms of assembly, monomer.

It localises to the cytoplasm. The enzyme catalyses 7-aminomethyl-7-carbaguanosine(34) in tRNA + S-adenosyl-L-methionine = epoxyqueuosine(34) in tRNA + adenine + L-methionine + 2 H(+). It functions in the pathway tRNA modification; tRNA-queuosine biosynthesis. Functionally, transfers and isomerizes the ribose moiety from AdoMet to the 7-aminomethyl group of 7-deazaguanine (preQ1-tRNA) to give epoxyqueuosine (oQ-tRNA). This is S-adenosylmethionine:tRNA ribosyltransferase-isomerase from Bacillus velezensis (strain DSM 23117 / BGSC 10A6 / LMG 26770 / FZB42) (Bacillus amyloliquefaciens subsp. plantarum).